The sequence spans 187 residues: Putative AgrB-like protein 1 (187 aa).

5 helical membrane-spanning segments follow: residues 29 to 49, 50 to 70, 81 to 98, 103 to 120, and 149 to 169; these read VVIVLTFEFIKCISVILIAGI, LGYFKESLIVILSMCFIKPFI, CFIATLIITTSIIMLVTF, LFSIVILNLFSIFSIYNK, and ILFLITLIFFKISWISQTITW.

This sequence belongs to the AgrB family.

It is found in the cell membrane. Functionally, may be involved in the proteolytic processing of a quorum sensing system signal molecule precursor. In Clostridium perfringens (strain 13 / Type A), this protein is Putative AgrB-like protein 1.